A 125-amino-acid polypeptide reads, in one-letter code: Large ribosomal subunit protein uL22 (125 aa).

Belongs to the universal ribosomal protein uL22 family. As to quaternary structure, part of the 50S ribosomal subunit.

Functionally, this protein binds specifically to 23S rRNA; its binding is stimulated by other ribosomal proteins, e.g. L4, L17, and L20. It is important during the early stages of 50S assembly. It makes multiple contacts with different domains of the 23S rRNA in the assembled 50S subunit and ribosome. The globular domain of the protein is located near the polypeptide exit tunnel on the outside of the subunit, while an extended beta-hairpin is found that lines the wall of the exit tunnel in the center of the 70S ribosome. The protein is Large ribosomal subunit protein uL22 of Acetivibrio thermocellus (strain ATCC 27405 / DSM 1237 / JCM 9322 / NBRC 103400 / NCIMB 10682 / NRRL B-4536 / VPI 7372) (Clostridium thermocellum).